Here is a 228-residue protein sequence, read N- to C-terminus: Cytidylate kinase (228 aa).

17–25 (GPTASGKGT) lines the ATP pocket.

It belongs to the cytidylate kinase family. Type 1 subfamily.

Its subcellular location is the cytoplasm. The enzyme catalyses CMP + ATP = CDP + ADP. The catalysed reaction is dCMP + ATP = dCDP + ADP. In Paraburkholderia phymatum (strain DSM 17167 / CIP 108236 / LMG 21445 / STM815) (Burkholderia phymatum), this protein is Cytidylate kinase.